Reading from the N-terminus, the 375-residue chain is ORC1-type DNA replication protein 3 (375 aa).

ATP-binding positions include Thr-66–Thr-70, Tyr-209, and Arg-221.

This sequence belongs to the CDC6/cdc18 family.

Its function is as follows. Involved in regulation of DNA replication. In Haloarcula marismortui (strain ATCC 43049 / DSM 3752 / JCM 8966 / VKM B-1809) (Halobacterium marismortui), this protein is ORC1-type DNA replication protein 3 (cdc6c).